Here is a 255-residue protein sequence, read N- to C-terminus: Small ribosomal subunit protein uS2 (255 aa).

The protein belongs to the universal ribosomal protein uS2 family.

This chain is Small ribosomal subunit protein uS2, found in Streptococcus thermophilus (strain ATCC BAA-491 / LMD-9).